Consider the following 363-residue polypeptide: Bonnadiene synthase (363 aa).

Residues aspartate 93, aspartate 98, asparagine 234, serine 238, and glutamate 242 each coordinate Mg(2+).

The protein belongs to the terpene synthase family. Mg(2+) serves as cofactor.

It catalyses the reaction (2E,6E,10E)-geranylgeranyl diphosphate = bonnadiene + diphosphate. Its pathway is secondary metabolite biosynthesis; terpenoid biosynthesis. Functionally, diterpene synthase that catalyzes the conversion of geranylgeranyl diphosphate (GGPP) to bonnadiene. Cannot use geranyl diphosphate (GPP), farnesyl diphosphate (FPP) and geranylfarnesyl diphosphate (GFPP). The sequence is that of Bonnadiene synthase from Allokutzneria albata (Kibdelosporangium albatum).